The following is a 237-amino-acid chain: Aspartate/glutamate leucyltransferase (237 aa).

This sequence belongs to the R-transferase family. Bpt subfamily.

It is found in the cytoplasm. It catalyses the reaction N-terminal L-glutamyl-[protein] + L-leucyl-tRNA(Leu) = N-terminal L-leucyl-L-glutamyl-[protein] + tRNA(Leu) + H(+). The enzyme catalyses N-terminal L-aspartyl-[protein] + L-leucyl-tRNA(Leu) = N-terminal L-leucyl-L-aspartyl-[protein] + tRNA(Leu) + H(+). Functionally, functions in the N-end rule pathway of protein degradation where it conjugates Leu from its aminoacyl-tRNA to the N-termini of proteins containing an N-terminal aspartate or glutamate. This chain is Aspartate/glutamate leucyltransferase, found in Shewanella amazonensis (strain ATCC BAA-1098 / SB2B).